The following is a 387-amino-acid chain: UDP-N-acetylglucosamine--N-acetylmuramyl-(pentapeptide) pyrophosphoryl-undecaprenol N-acetylglucosamine transferase (387 aa).

Residues 23–25, Asn135, Arg174, Ser203, Ile261, 280–285, and Gln306 each bind UDP-N-acetyl-alpha-D-glucosamine; these read TGG and ALTVSE.

It belongs to the glycosyltransferase 28 family. MurG subfamily.

It is found in the cell inner membrane. The catalysed reaction is di-trans,octa-cis-undecaprenyl diphospho-N-acetyl-alpha-D-muramoyl-L-alanyl-D-glutamyl-meso-2,6-diaminopimeloyl-D-alanyl-D-alanine + UDP-N-acetyl-alpha-D-glucosamine = di-trans,octa-cis-undecaprenyl diphospho-[N-acetyl-alpha-D-glucosaminyl-(1-&gt;4)]-N-acetyl-alpha-D-muramoyl-L-alanyl-D-glutamyl-meso-2,6-diaminopimeloyl-D-alanyl-D-alanine + UDP + H(+). It participates in cell wall biogenesis; peptidoglycan biosynthesis. In terms of biological role, cell wall formation. Catalyzes the transfer of a GlcNAc subunit on undecaprenyl-pyrophosphoryl-MurNAc-pentapeptide (lipid intermediate I) to form undecaprenyl-pyrophosphoryl-MurNAc-(pentapeptide)GlcNAc (lipid intermediate II). In Colwellia psychrerythraea (strain 34H / ATCC BAA-681) (Vibrio psychroerythus), this protein is UDP-N-acetylglucosamine--N-acetylmuramyl-(pentapeptide) pyrophosphoryl-undecaprenol N-acetylglucosamine transferase.